The sequence spans 556 residues: Aplysianin-A (556 aa).

The signal sequence occupies residues 1–19 (MAVRFLALGLLIFVTSCSG). N-linked (GlcNAc...) asparagine glycosylation is found at N150, N177, N374, N399, N414, and N430.

To A.fulica achacin protein. In terms of assembly, homotetramer. In terms of tissue distribution, albumen gland.

Functionally, has antibacterial activity against Gram-negative and Gram-positive bacteria. This is Aplysianin-A from Aplysia kurodai (Kuroda's sea hare).